The chain runs to 295 residues: Phosphatidylserine decarboxylase proenzyme (295 aa).

Catalysis depends on charge relay system; for autoendoproteolytic cleavage activity residues aspartate 113, histidine 169, and serine 256. The active-site Schiff-base intermediate with substrate; via pyruvic acid; for decarboxylase activity is serine 256. At serine 256 the chain carries Pyruvic acid (Ser); by autocatalysis.

Belongs to the phosphatidylserine decarboxylase family. PSD-B subfamily. Prokaryotic type II sub-subfamily. In terms of assembly, heterodimer of a large membrane-associated beta subunit and a small pyruvoyl-containing alpha subunit. Pyruvate is required as a cofactor. In terms of processing, is synthesized initially as an inactive proenzyme. Formation of the active enzyme involves a self-maturation process in which the active site pyruvoyl group is generated from an internal serine residue via an autocatalytic post-translational modification. Two non-identical subunits are generated from the proenzyme in this reaction, and the pyruvate is formed at the N-terminus of the alpha chain, which is derived from the carboxyl end of the proenzyme. The autoendoproteolytic cleavage occurs by a canonical serine protease mechanism, in which the side chain hydroxyl group of the serine supplies its oxygen atom to form the C-terminus of the beta chain, while the remainder of the serine residue undergoes an oxidative deamination to produce ammonia and the pyruvoyl prosthetic group on the alpha chain. During this reaction, the Ser that is part of the protease active site of the proenzyme becomes the pyruvoyl prosthetic group, which constitutes an essential element of the active site of the mature decarboxylase.

Its subcellular location is the cell membrane. The catalysed reaction is a 1,2-diacyl-sn-glycero-3-phospho-L-serine + H(+) = a 1,2-diacyl-sn-glycero-3-phosphoethanolamine + CO2. It participates in phospholipid metabolism; phosphatidylethanolamine biosynthesis; phosphatidylethanolamine from CDP-diacylglycerol: step 2/2. Functionally, catalyzes the formation of phosphatidylethanolamine (PtdEtn) from phosphatidylserine (PtdSer). The protein is Phosphatidylserine decarboxylase proenzyme of Clostridium botulinum (strain 657 / Type Ba4).